Consider the following 67-residue polypeptide: MSLLPAVKVLPLGYLGIVLVFSLILRSAMVDFIQDAGKLERIDTYKREAQMIFGAPMWALGHLMGRK.

Residues 1–30 (MSLLPAVKVLPLGYLGIVLVFSLILRSAMV) form the signal peptide. The propeptide occupies 31 to 49 (DFIQDAGKLERIDTYKREA). Position 50 is a pyrrolidone carboxylic acid (Gln50). Residue Met64 is modified to Methionine amide.

The protein belongs to the bombesin/neuromedin-B/ranatensin family. In terms of tissue distribution, expressed by the skin dorsal glands.

It is found in the secreted. Stimulates smooth muscle contraction in isolated rat stomach strip. The protein is Bombesin of Sanguirana varians (Palawan frog).